The chain runs to 213 residues: Thymidylate kinase (213 aa).

Residue 10–17 participates in ATP binding; sequence GLEGAGKT.

This sequence belongs to the thymidylate kinase family.

It carries out the reaction dTMP + ATP = dTDP + ADP. In terms of biological role, phosphorylation of dTMP to form dTDP in both de novo and salvage pathways of dTTP synthesis. In Enterobacter sp. (strain 638), this protein is Thymidylate kinase.